A 340-amino-acid polypeptide reads, in one-letter code: MHNTDVVIIGAGPVGLFAVFQAGMLGMKCHVIDAQEVIGGQCITLYPEKPIYDIPAYPKIVAEELIKQLALQAAPFNPIYHLNQQAIELNKQDDFFEIKTSKNTLIKSKVIIIAAGAGSFGPNKPPLANIEDFESKSVFYFINDKSKFAGKNIVIAGGGDSAVDWAISLSDIANKIYLVHRRDKFTAAPESVRQLRHIAETNKIELITGYQLNALDGNNSELQSVIVKDLQNNTRKLDANILLPFFGLKQDLGSLANWGLNVKLHHIEVDSSYYQTNIEGIYAIGDIAHYVGKLKLILTGFAEAASSLHHAYSRVFDGKALHFEYSTTKNTGKRSKSVTK.

FAD contacts are provided by D33, Q41, Y46, A86, F120, D286, and T327.

This sequence belongs to the ferredoxin--NADP reductase type 2 family. As to quaternary structure, homodimer. FAD is required as a cofactor.

The enzyme catalyses 2 reduced [2Fe-2S]-[ferredoxin] + NADP(+) + H(+) = 2 oxidized [2Fe-2S]-[ferredoxin] + NADPH. In Rickettsia rickettsii (strain Iowa), this protein is Ferredoxin--NADP reductase.